The following is a 93-amino-acid chain: Small ribosomal subunit protein uS19 (93 aa).

It belongs to the universal ribosomal protein uS19 family.

Its function is as follows. Protein S19 forms a complex with S13 that binds strongly to the 16S ribosomal RNA. The chain is Small ribosomal subunit protein uS19 from Leifsonia xyli subsp. xyli (strain CTCB07).